The sequence spans 241 residues: Accessory protein p30II (241 aa).

2 short sequence motifs (nuclear localization signal) span residues 73-78 (RRCRSR) and 91-98 (GPRRSRPR). 2 stretches are compositionally biased toward low complexity: residues 79 to 100 (CVSP…PRLS) and 107 to 136 (PSST…TSRS). A disordered region spans residues 79-151 (CVSPRGGAFS…GKHRNSPADT (73 aa)). The short motif at 175-184 (LRVWRLCTRR) is the Mitochondrial targeting signal element.

The protein belongs to the HTLV-1 accessory protein p30II family. In terms of assembly, p30II binds to the KIX domains of CREBBP and EP300.

The protein resides in the host nucleus. Its subcellular location is the host nucleolus. The protein localises to the host mitochondrion inner membrane. In terms of biological role, p30II is a multifunctional regulator that sequesters EP300/CREBBP and down-regulates CREB-responsive element (CRE) and Tax-responsive element (TRE) mediated transcription. Specifically binds and represses tax/rex mRNA nuclear export. Since Tax and Rex are positive regulators of viral gene expression, their inhibition by p30II reduces virion production, and allows the virus to escape the host immune surveillance and persist latently in an immune-competent host. Functionally, p13II increases mitochondrial permeability to monovalent cations, producing a rapid, membrane potential-dependent influx of potassium. This could involve a channel-forming activity. Interferes with cell proliferation and transformation and promotes apoptosis induced by ceramide and Fas ligand, probably using the Ras signaling. The sequence is that of Accessory protein p30II from Human T-cell leukemia virus 1 (strain Japan ATK-1 subtype A) (HTLV-1).